Here is a 417-residue protein sequence, read N- to C-terminus: MTRRYLFTSESVTEGHPDKICDQISDTILDALLTEDPSSRVAAEVVVNTGLVLITGEVSTQAQTNLIDLARRKIAEIGYTGEDSGFGANNCTVLIALDKQSPDIAQGVDTAQEQRQASSDERFDSIGAGDQGIMFGYACNEAPELMPLPISLSHRLARQLAVVRHNGQLDYLRPDGKTQVTIAYEDGKPVAIDTILISTQHKAAIGDISDDNAVQERIKSDLWEQVVLPVFSDLVIQPDSATRFLVNPTGKFVIGGPQGDAGLTGRKIIVDTYGGYSRHGGGAFSGKDPTKVDRSAAYACRYVAKNIVAAGLAEKCEVQLSYAIGVARPVSVLVETFGTGKVADEVLLDLVRKHFELRPAGIIEHFNLQRLPGERGGRFYQEVAAYGHFGRNDLDLPWEQTDKADTLRQEALATTQA.

His16 is a binding site for ATP. A Mg(2+)-binding site is contributed by Asp18. Residue Glu44 coordinates K(+). L-methionine contacts are provided by Glu57 and Gln100. The interval 100–110 (QSPDIAQGVDT) is flexible loop. Residues 175–177 (DGK), 251–252 (KF), Asp260, 266–267 (RK), Ala283, and Lys287 each bind ATP. Position 260 (Asp260) interacts with L-methionine. Lys291 serves as a coordination point for L-methionine.

This sequence belongs to the AdoMet synthase family. In terms of assembly, homotetramer; dimer of dimers. Requires Mg(2+) as cofactor. It depends on K(+) as a cofactor.

Its subcellular location is the cytoplasm. It catalyses the reaction L-methionine + ATP + H2O = S-adenosyl-L-methionine + phosphate + diphosphate. The protein operates within amino-acid biosynthesis; S-adenosyl-L-methionine biosynthesis; S-adenosyl-L-methionine from L-methionine: step 1/1. In terms of biological role, catalyzes the formation of S-adenosylmethionine (AdoMet) from methionine and ATP. The overall synthetic reaction is composed of two sequential steps, AdoMet formation and the subsequent tripolyphosphate hydrolysis which occurs prior to release of AdoMet from the enzyme. This is S-adenosylmethionine synthase from Synechococcus elongatus (strain ATCC 33912 / PCC 7942 / FACHB-805) (Anacystis nidulans R2).